A 277-amino-acid chain; its full sequence is uncharacterized protein (277 aa).

A run of 4 helical transmembrane segments spans residues Tyr-37–Trp-59, Leu-63–Ile-82, Met-214–Ile-236, and Trp-246–Phe-268.

Its subcellular location is the cell membrane. This is an uncharacterized protein from Bacillus anthracis.